Here is an 838-residue protein sequence, read N- to C-terminus: Periplasmic nitrate reductase (838 aa).

A signal peptide (tat-type signal) is located at residues methionine 1 to alanine 29. The 4Fe-4S Mo/W bis-MGD-type domain occupies leucine 40–aspartate 96. Residues cysteine 47, cysteine 50, cysteine 54, and cysteine 82 each contribute to the [4Fe-4S] cluster site. Mo-bis(molybdopterin guanine dinucleotide)-binding positions include lysine 84, glutamine 151, asparagine 176, cysteine 180, tryptophan 213 to methionine 220, serine 244 to histidine 248, glycine 263 to aspartate 265, methionine 374, glutamine 378, asparagine 484, serine 510 to aspartate 511, lysine 533, aspartate 560, and threonine 720 to serine 729. Residue phenylalanine 796 coordinates substrate. Positions 804 and 821 each coordinate Mo-bis(molybdopterin guanine dinucleotide).

It belongs to the prokaryotic molybdopterin-containing oxidoreductase family. NasA/NapA/NarB subfamily. As to quaternary structure, component of the periplasmic nitrate reductase NapAB complex composed of NapA and NapB. [4Fe-4S] cluster serves as cofactor. The cofactor is Mo-bis(molybdopterin guanine dinucleotide). Post-translationally, predicted to be exported by the Tat system. The position of the signal peptide cleavage has not been experimentally proven.

It is found in the periplasm. The enzyme catalyses 2 Fe(II)-[cytochrome] + nitrate + 2 H(+) = 2 Fe(III)-[cytochrome] + nitrite + H2O. Its function is as follows. Catalytic subunit of the periplasmic nitrate reductase complex NapAB. Receives electrons from NapB and catalyzes the reduction of nitrate to nitrite. The protein is Periplasmic nitrate reductase of Methylobacterium sp. (strain 4-46).